We begin with the raw amino-acid sequence, 300 residues long: Sporulation protein SPS18 (300 aa).

Residues 11 to 130 enclose the Arf-GAP domain; sequence ENRKRLLRAK…LANEVRSNDI (120 aa). The C4-type zinc finger occupies 28–51; the sequence is CFECKSVNPQFVSCSFGIFICVNC.

The chain is Sporulation protein SPS18 (SPS18) from Saccharomyces cerevisiae (strain ATCC 204508 / S288c) (Baker's yeast).